We begin with the raw amino-acid sequence, 130 residues long: Small ribosomal subunit protein uS11 (130 aa).

This sequence belongs to the universal ribosomal protein uS11 family. In terms of assembly, part of the 30S ribosomal subunit. Interacts with proteins S7 and S18. Binds to IF-3.

Its function is as follows. Located on the platform of the 30S subunit, it bridges several disparate RNA helices of the 16S rRNA. Forms part of the Shine-Dalgarno cleft in the 70S ribosome. This chain is Small ribosomal subunit protein uS11, found in Prochlorococcus marinus (strain NATL2A).